Here is a 319-residue protein sequence, read N- to C-terminus: Transcription factor VBP (319 aa).

Composition is skewed to low complexity over residues 1–31 (MPGRAAHQEAAAAGGAAAEPTAAGGSAGAVA) and 143–158 (ASASTGSPVSSSSTAV). Disordered stretches follow at residues 1–35 (MPGRAAHQEAAAAGGAAAEPTAAGGSAGAVAQQPE) and 139–186 (EKEP…DPDC). Residues 159 to 180 (YQQSEAASSTESPPQNERNTPS) are compositionally biased toward polar residues. One can recognise a bZIP domain in the interval 243–306 (DEKYWTRRKK…GRCKNIVSKY (64 aa)). Positions 245 to 265 (KYWTRRKKNNVAAKRSRDARR) are basic motif. A leucine-zipper region spans residues 266–273 (LKENQITI).

It belongs to the bZIP family. PAR subfamily. As to quaternary structure, binds DNA as a homodimer or a heterodimer. Exists as a stable dimer in the absence of DNA. Isoform 1 and isoform 3 are expressed in a variety of somatic tissues, including liver, heart, intestine, stomach and kidney. Both isoforms are also expressed in hepatoma (LMH) cells and in embryonic fibroblast cell lines. Isoform 2 and isoform 4 are expressed in adult heart and intestine.

The protein resides in the nucleus. Transcription factor that binds to and transactivates the vitellogenin II (VTG2) promoter. Binds to the palindromic sequence 5'-GTTTACATAAAC-3'. The polypeptide is Transcription factor VBP (TEF) (Gallus gallus (Chicken)).